The following is a 149-amino-acid chain: UPF0260 protein Pfl01_1392 (149 aa).

Belongs to the UPF0260 family.

This Pseudomonas fluorescens (strain Pf0-1) protein is UPF0260 protein Pfl01_1392.